The primary structure comprises 1213 residues: Formin (1213 aa).

Disordered stretches follow at residues 1–24, 66–111, 144–169, 183–216, and 357–489; these read MEGG…SEPD, QANN…EPEP, VHTT…TSKC, GNNQ…PISQ, and DVSK…PKAN. Basic and acidic residues-rich tracts occupy residues 187 to 210 and 431 to 464; these read SKEE…DTEL and EAIK…DKSP. 2 coiled-coil regions span residues 428–450 and 503–572; these read SELE…VFER and EYQA…IGVS. The segment at 624 to 774 is disordered; it reads ISTQGENKDS…PRKPAIEPSR (151 aa). Over residues 636 to 647 the composition is skewed to polar residues; the sequence is VPSSESVLSCQP. Pro residues-rich tracts occupy residues 650–672, 680–689, and 718–751; these read MLPP…PPPF, LVPPPPPLPT, and PAPP…PPGP. The 100-residue stretch at 652 to 751 folds into the FH1 domain; sequence PPSPPPPPPP…LPPPPPPPGP (100 aa). The span at 755–764 shows a compositional bias: polar residues; the sequence is FNSTLSSSQG. The FH2 domain occupies 766 to 1182; that stretch reads RKPAIEPSRP…KVAQQSVSKL (417 aa). Residues 1050–1125 adopt a coiled-coil conformation; that stretch reads FQASQVKFED…ENAQKCFEET (76 aa). Residues 1193 to 1213 form a disordered region; it reads INPTASLKERLRQKEANVNAN.

Belongs to the formin homology family. Cappuccino subfamily. As to expression, present in the adult brain, kidney, brain, heart and intestine and throughout the embryo.

It localises to the nucleus. In terms of biological role, is important for morphogenesis of limb and kidney and may be involved in determining dorsoventral neural tube polarity and motor neuron induction. It may also have a function in differentiated cells or be involved in maintaining specific differentiated states. In Gallus gallus (Chicken), this protein is Formin (LD).